The following is an 81-amino-acid chain: Antitoxin VapB28 (81 aa).

Its function is as follows. Antitoxin component of a type II toxin-antitoxin (TA) system. This is Antitoxin VapB28 (vapB28) from Mycobacterium tuberculosis (strain CDC 1551 / Oshkosh).